Reading from the N-terminus, the 183-residue chain is Ribosome rescue factor SmrB (183 aa).

One can recognise a Smr domain in the interval 98–173; sequence LDLHGLTQLQ…GDAALLVLIE (76 aa).

Belongs to the SmrB family. In terms of assembly, associates with collided ribosomes, but not with correctly translating polysomes.

In terms of biological role, acts as a ribosome collision sensor. Detects stalled/collided disomes (pairs of ribosomes where the leading ribosome is stalled and a second ribosome has collided with it) and endonucleolytically cleaves mRNA at the 5' boundary of the stalled ribosome. Stalled/collided disomes form a new interface (primarily via the 30S subunits) that binds SmrB. Cleaved mRNA becomes available for tmRNA ligation, leading to ribosomal subunit dissociation and rescue of stalled ribosomes. This chain is Ribosome rescue factor SmrB, found in Shigella dysenteriae serotype 1 (strain Sd197).